A 394-amino-acid chain; its full sequence is tRNA-specific adenosine deaminase 1 (394 aa).

The A to I editase domain occupies 54-388 (SLGCGTKCIG…TKKPHELLDF (335 aa)). Histidine 78 provides a ligand contact to Zn(2+). The active-site Proton donor is the glutamate 80. 1D-myo-inositol hexakisphosphate-binding residues include arginine 84 and arginine 85. Zn(2+)-binding residues include cysteine 127 and cysteine 191. 1D-myo-inositol hexakisphosphate contacts are provided by lysine 194, arginine 197, lysine 320, lysine 357, and lysine 381.

It belongs to the ADAT1 family. 1D-myo-inositol hexakisphosphate serves as cofactor. In terms of tissue distribution, widely expressed in early embryos, and later concentrates in the central nervous system.

It carries out the reaction adenosine(37) in tRNA(Ala) + H2O + H(+) = inosine(37) in tRNA(Ala) + NH4(+). In terms of biological role, specifically deaminates adenosine-37 to inosine in tRNA-Ala. The chain is tRNA-specific adenosine deaminase 1 from Drosophila melanogaster (Fruit fly).